Consider the following 123-residue polypeptide: Fluoride-specific ion channel FluC 2 (123 aa).

The next 2 helical transmembrane spans lie at 1–21 and 30–50; these read MTMLWVCLAGGLGAVARFLLD and VPVPLGTLVINVMGSLLLGLI. 2 residues coordinate Na(+): glycine 74 and threonine 77. Residues 99-119 form a helical membrane-spanning segment; that stretch reads ALHCMGMAIAGVLAAILGLAL.

This sequence belongs to the fluoride channel Fluc/FEX (TC 1.A.43) family.

The protein localises to the cell membrane. The enzyme catalyses fluoride(in) = fluoride(out). Its activity is regulated as follows. Na(+) is not transported, but it plays an essential structural role and its presence is essential for fluoride channel function. Functionally, fluoride-specific ion channel. Important for reducing fluoride concentration in the cell, thus reducing its toxicity. The polypeptide is Fluoride-specific ion channel FluC 2 (Cutibacterium acnes (strain DSM 16379 / KPA171202) (Propionibacterium acnes)).